We begin with the raw amino-acid sequence, 292 residues long: Probable vesicular-fusion protein sec17 homolog (292 aa).

The protein belongs to the SNAP family.

Its subcellular location is the membrane. Functionally, required for vesicular transport between the endoplasmic reticulum and the Golgi apparatus. This chain is Probable vesicular-fusion protein sec17 homolog, found in Neurospora crassa (strain ATCC 24698 / 74-OR23-1A / CBS 708.71 / DSM 1257 / FGSC 987).